Reading from the N-terminus, the 478-residue chain is Transcript termination protein A18 (478 aa).

The Helicase ATP-binding domain maps to 98-254; it reads KLSTHRPMYM…NDVVNVLKVS (157 aa). An ATP-binding site is contributed by 111 to 118; that stretch reads LSCGFGKT. A DESH box motif is present at residues 204-207; it reads DESH. Residues 302–468 enclose the Helicase C-terminal domain; the sequence is PRNNLIVETV…GIEGTKEEPV (167 aa).

This sequence belongs to the helicase family. Poxviruses subfamily. In terms of assembly, interacts with G2. Might be part of a transcription complex composed at least of G2, A18, and H5.

It localises to the virion. Functionally, DNA helicase which seems to act as a postreplicative transcription termination factor. Involved in ATP-dependent release of nascent RNA. Forms a stable complex with single-stranded DNA, and to a lesser extent RNA. This chain is Transcript termination protein A18, found in Rabbit fibroma virus (strain Kasza) (RFV).